The chain runs to 263 residues: N-acyl homoserine lactonase AttM (263 aa).

Zn(2+) contacts are provided by histidine 103, histidine 105, aspartate 107, histidine 108, histidine 180, aspartate 202, and histidine 247.

Belongs to the metallo-beta-lactamase superfamily. It depends on Zn(2+) as a cofactor.

The catalysed reaction is an N-acyl-L-homoserine lactone + H2O = an N-acyl-L-homoserine + H(+). The protein is N-acyl homoserine lactonase AttM of Agrobacterium fabrum (strain C58 / ATCC 33970) (Agrobacterium tumefaciens (strain C58)).